We begin with the raw amino-acid sequence, 204 residues long: Small rubber particle protein (204 aa).

This sequence belongs to the REF/SRPP family. Auto-assembles in solution into stable nanomultimers of a globular nature. Not glycosylated. In terms of processing, the N-terminus is blocked. Post-translationally, consistent shifts of about 266 Da observed by MS in various forms of the intact protein suggest the addition of stearolyl groups. As to expression, highly expressed in the specialized vessel laticifers, but localized only in the laticifer layers in the conducting phloem. Also detected in leaves.

Its subcellular location is the cytoplasm. Its function is as follows. Involved in the biosynthesis of rubber, an isoprenoid polymer (cis-1,4-polyisoprene). This is Small rubber particle protein from Hevea brasiliensis (Para rubber tree).